Consider the following 148-residue polypeptide: Receptor activity-modifying protein 1 (148 aa).

Positions 1–26 are cleaved as a signal peptide; it reads MAPGLRGLPRCGLWLLLAHHLFMVTA. Intrachain disulfides connect C27/C82, C40/C72, and C57/C104. Topologically, residues 27-118 are extracellular; that stretch reads CRDPDYGTLI…RALRDPPNSI (92 aa). The chain crosses the membrane as a helical span at residues 119-140; sequence LCPFIALPITVTLLMTALVVWR. Residues 141 to 148 lie on the Cytoplasmic side of the membrane; it reads SKRTEGIV.

It belongs to the RAMP family. In terms of assembly, heterodimer of CALCRL and RAMP1; the interaction induces allosteric modulation of CALCRL function and CGRP1/CALCA and CGRP2/CALCB ligand specificity. Heterodimer of CALCR and RAMP1; interaction forms the AMYR1 receptor complex for amylin/IAPP and CGRP1/CALCA ligands. As to expression, expressed predominantly in the thymus, skeletal muscle, embryonic and adult brain, embryonic and adult lung, and colon.

Its subcellular location is the cell membrane. Functionally, accessory protein that interacts with and modulates the function of G-protein coupled receptors including calcitonin gene-related peptide type 1 receptor (CALCRL) and calcitonin receptor (CALCR). Required for the transport of CALCRL to the plasma membrane. Together with CALCRL, form the receptor complex for the calcitonin gene-related peptides CGRP1/CALCA and CGRP2/CALCB. Together with CALCR, form the AMYR1 receptor complex for amylin/IAPP and CGRP1/CALCA. This is Receptor activity-modifying protein 1 from Mus musculus (Mouse).